The following is a 510-amino-acid chain: NAD(P)H-quinone oxidoreductase subunit 2 A, chloroplastic (510 aa).

13 helical membrane-spanning segments follow: residues 24 to 44, 57 to 77, 99 to 119, 124 to 144, 149 to 169, 183 to 203, 227 to 247, 295 to 315, 323 to 343, 354 to 374, 395 to 415, 418 to 438, and 484 to 504; these read LLLF…GLIL, IPWL…ALLF, IFQF…VEYI, MAIT…MFLC, LITI…LSGY, YLLM…WLYG, PGIS…LSPA, WHLL…LIAI, MLAY…IVGD, YMLF…LFGL, ALSL…AGFF, LYLF…IGLL, and MIVC…IIAI.

The protein belongs to the complex I subunit 2 family. NDH is composed of at least 16 different subunits, 5 of which are encoded in the nucleus.

The protein localises to the plastid. It is found in the chloroplast thylakoid membrane. It carries out the reaction a plastoquinone + NADH + (n+1) H(+)(in) = a plastoquinol + NAD(+) + n H(+)(out). The catalysed reaction is a plastoquinone + NADPH + (n+1) H(+)(in) = a plastoquinol + NADP(+) + n H(+)(out). NDH shuttles electrons from NAD(P)H:plastoquinone, via FMN and iron-sulfur (Fe-S) centers, to quinones in the photosynthetic chain and possibly in a chloroplast respiratory chain. The immediate electron acceptor for the enzyme in this species is believed to be plastoquinone. Couples the redox reaction to proton translocation, and thus conserves the redox energy in a proton gradient. This is NAD(P)H-quinone oxidoreductase subunit 2 A, chloroplastic from Solanum lycopersicum (Tomato).